The following is a 172-amino-acid chain: Lipoprotein signal peptidase (172 aa).

The next 4 helical transmembrane spans lie at 12–32 (TSAANGSLAPWLGVALIVILF), 43–63 (VFAYGVAHEVTSFFNLILVYN), 77–97 (WQRWAFTALGVVAALVICYLL), and 102–122 (GQKMFCTALALILGGALGNVI). Catalysis depends on residues Asp132 and Asp150. Residues 142-162 (HWPAFNLADSAITVGAVLLVL) traverse the membrane as a helical segment.

This sequence belongs to the peptidase A8 family.

Its subcellular location is the cell inner membrane. The catalysed reaction is Release of signal peptides from bacterial membrane prolipoproteins. Hydrolyzes -Xaa-Yaa-Zaa-|-(S,diacylglyceryl)Cys-, in which Xaa is hydrophobic (preferably Leu), and Yaa (Ala or Ser) and Zaa (Gly or Ala) have small, neutral side chains.. It functions in the pathway protein modification; lipoprotein biosynthesis (signal peptide cleavage). Its function is as follows. This protein specifically catalyzes the removal of signal peptides from prolipoproteins. The polypeptide is Lipoprotein signal peptidase (Paraburkholderia phytofirmans (strain DSM 17436 / LMG 22146 / PsJN) (Burkholderia phytofirmans)).